The primary structure comprises 140 residues: ATP synthase epsilon chain (140 aa).

The protein belongs to the ATPase epsilon chain family. As to quaternary structure, F-type ATPases have 2 components, CF(1) - the catalytic core - and CF(0) - the membrane proton channel. CF(1) has five subunits: alpha(3), beta(3), gamma(1), delta(1), epsilon(1). CF(0) has three main subunits: a, b and c.

It localises to the cell inner membrane. In terms of biological role, produces ATP from ADP in the presence of a proton gradient across the membrane. This is ATP synthase epsilon chain from Stenotrophomonas maltophilia (strain R551-3).